We begin with the raw amino-acid sequence, 194 residues long: MSPFSIVLIGFAMSTDAFAAAIGKGAAMRKPQWRDALRAGLIFGCIEAITPVIGWLLGRAAASYVSAYDHWIAFVLLGALGTHMIVAGLRNGPEDAEDAASDTPKRHGVLGLATTGFATSIDAMAVGVSLAFLDVHIGVVAVVVGLCTFSMVTAGVMLGRALGNLIGKRAEMLGGLILVIVGSVILYEHLSGAG.

Transmembrane regions (helical) follow at residues P3–G23, L37–L57, D69–L89, L110–F132, C147–G167, and M172–G192.

The protein belongs to the MntP (TC 9.B.29) family.

The protein resides in the cell inner membrane. Probably functions as a manganese efflux pump. The sequence is that of Putative manganese efflux pump MntP from Xanthomonas axonopodis pv. citri (strain 306).